Consider the following 241-residue polypeptide: tRNA pseudouridine synthase A (241 aa).

Residue aspartate 53 is the Nucleophile of the active site. Tyrosine 110 contributes to the substrate binding site.

Belongs to the tRNA pseudouridine synthase TruA family. In terms of assembly, homodimer.

It catalyses the reaction uridine(38/39/40) in tRNA = pseudouridine(38/39/40) in tRNA. Functionally, formation of pseudouridine at positions 38, 39 and 40 in the anticodon stem and loop of transfer RNAs. This chain is tRNA pseudouridine synthase A, found in Malacoplasma penetrans (strain HF-2) (Mycoplasma penetrans).